The following is a 556-amino-acid chain: Insulin-like growth factor 2 mRNA-binding protein 2 (556 aa).

RRM domains are found at residues 3–76 (NKLY…YSVS) and 82–157 (RKIQ…YIPD). Serine 11 bears the Phosphoserine mark. The segment at 156–188 (PDEEVSSPSPPQRAQRGDHSSREQGHAPGGTSQ) is disordered. A phosphoserine mark is found at serine 162 and serine 164. Residues 170-180 (QRGDHSSREQG) show a composition bias toward basic and acidic residues. 4 consecutive KH domains span residues 193 to 258 (DFPL…CRMI), 274 to 341 (EIPL…EIEI), 384 to 449 (QEIV…QGRI), and 466 to 532 (KLEA…QRKI). Threonine 507 is subject to Phosphothreonine.

It belongs to the RRM IMP/VICKZ family. In terms of assembly, can form homooligomers and heterooligomers with IGF2BP1 and IGF2BP3 in an RNA-dependent manner. Interacts with HNRPD. Interacts with IGF2BP1. Interacts with ELAVL1, DHX9, HNRNPU, MATR3 and PABPC1.

Its subcellular location is the nucleus. It localises to the cytoplasm. The protein resides in the P-body. It is found in the stress granule. Functionally, RNA-binding factor that recruits target transcripts to cytoplasmic protein-RNA complexes (mRNPs). This transcript 'caging' into mRNPs allows mRNA transport and transient storage. It also modulates the rate and location at which target transcripts encounter the translational apparatus and shields them from endonuclease attacks or microRNA-mediated degradation. Preferentially binds to N6-methyladenosine (m6A)-containing mRNAs and increases their stability. Binds to the 5'-UTR of the insulin-like growth factor 2 (IGF2) mRNAs. Binding is isoform-specific. Binds to beta-actin/ACTB and MYC transcripts. Increases MYC mRNA stability by binding to the coding region instability determinant (CRD) and binding is enhanced by m6A-modification of the CRD. The polypeptide is Insulin-like growth factor 2 mRNA-binding protein 2 (IGF2BP2) (Pongo abelii (Sumatran orangutan)).